Here is a 467-residue protein sequence, read N- to C-terminus: GTPase Der (467 aa).

2 consecutive EngA-type G domains span residues 3–167 (PTLV…PYEE) and 179–352 (PVIA…AAAR). Residues 9–16 (GRPNVGKS), 56–60 (DTGGF), 119–122 (NKTE), 185–192 (GRPNVGKS), 232–236 (DTAGL), and 297–300 (NKWD) each bind GTP. One can recognise a KH-like domain in the interval 353 to 437 (AHIPTPKLTR…PLRVEFRTGH (85 aa)). The interval 434 to 467 (RTGHNPYAGKKTPLTEEEARRAHSRRRRNRKKYG) is disordered. Over residues 455–467 (AHSRRRRNRKKYG) the composition is skewed to basic residues.

Belongs to the TRAFAC class TrmE-Era-EngA-EngB-Septin-like GTPase superfamily. EngA (Der) GTPase family. Associates with the 50S ribosomal subunit.

In terms of biological role, GTPase that plays an essential role in the late steps of ribosome biogenesis. The chain is GTPase Der from Nitrosomonas europaea (strain ATCC 19718 / CIP 103999 / KCTC 2705 / NBRC 14298).